The following is a 227-amino-acid chain: UPF0173 metal-dependent hydrolase BCAH820_4729 (227 aa).

Belongs to the UPF0173 family.

The polypeptide is UPF0173 metal-dependent hydrolase BCAH820_4729 (Bacillus cereus (strain AH820)).